We begin with the raw amino-acid sequence, 464 residues long: Cystathionine beta-lyase, chloroplastic (464 aa).

The N-terminal 55 residues, 1–55 (MTSSLSLHSSFVPSFADLSDRGLISKNSPTSVSISKVPTWEKKQISNRNSFKLNC), are a transit peptide targeting the chloroplast. Residues Tyr127, Arg129, Gly157, Met158, Ser275, and Thr277 each coordinate pyridoxal 5'-phosphate. An N6-(pyridoxal phosphate)lysine modification is found at Lys278.

This sequence belongs to the trans-sulfuration enzymes family. As to quaternary structure, forms homodimers. May form homotetramers from two homodimers. The cofactor is pyridoxal 5'-phosphate.

It is found in the plastid. The protein localises to the chloroplast. The enzyme catalyses L,L-cystathionine + H2O = L-homocysteine + pyruvate + NH4(+). It carries out the reaction an S-substituted L-cysteine + H2O = a thiol + pyruvate + NH4(+). It functions in the pathway amino-acid biosynthesis; L-methionine biosynthesis via de novo pathway; L-homocysteine from L-cystathionine: step 1/1. Functionally, catalyzes the penultimate step in the de novo biosynthesis of methionine. Its role in methionine metabolism may affect plant development in different organs, probably by modifying plant auxin transport. Its cysteine desulfhydrase activity may be involved in hydrogen sulfur production using L-cysteine as a substrate. This is Cystathionine beta-lyase, chloroplastic from Arabidopsis thaliana (Mouse-ear cress).